The following is a 523-amino-acid chain: MAAVGRVGSFGSSPPGLASTYASGPLANELASGSGGPAAGDDEDGQNLWSRILREVSTRSRSKLPTGKNVLLLGEDGAGKTSLIRRIQGIEEYKKGRGLEYLYLNVHDEDRDDQTRCNVWILDGDLYHKGLLKFSLDALSLRDTLVMLVVDMSKPWTALDSLQKWASVVREHVDKLKIPPEEMKEMEQKLIRDFQEYVEPGEDFPASPQRRATAAQEDRDDSVVLPLGADTLTHNLGLPVLVVCTKCDAISVLEKEHDYRDEHFDFIQSHIRKFCLQYGAALIYTSVKENKNIDLVYKYIVQKLYGFPYKIPAVVVEKDAVFIPAGWDNDKKIGILHENFQTLKIEDNFEDIITKPPVRKFVHEKEIMAEDDQVFLMKLQSLLAKQPPTAAGRPVDASPRVPGGSPRTPNRSVSSNVASVSPIPAGSKKIDPNMKAGATSEGVLANFFNSLLSKKTGSPGGPGVGGSPGGGAAGASTSLPPSAKKSGQKPVLSDVHAELDRITRKPASVSPTTPPSPTEGEAS.

The segment at 1-45 (MAAVGRVGSFGSSPPGLASTYASGPLANELASGSGGPAAGDDEDG) is disordered. Position 74-81 (74-81 (GEDGAGKT)) interacts with ATP. Serine 207 is subject to Phosphoserine. Threonine 213 bears the Phosphothreonine mark. Disordered regions lie at residues 387–434 (PPTA…DPNM) and 457–523 (GSPG…GEAS). A phosphoserine mark is found at serine 398 and serine 405. Threonine 408 carries the phosphothreonine modification. A phosphoserine mark is found at serine 412, serine 419, serine 421, and serine 427. Residues 412–421 (SVSSNVASVS) show a composition bias toward low complexity. Gly residues predominate over residues 458–473 (SPGGPGVGGSPGGGAA). Residues 474–483 (GASTSLPPSA) show a composition bias toward low complexity. Phosphoserine occurs at positions 486 and 510. A phosphothreonine mark is found at threonine 512 and threonine 513. Position 516 is a phosphoserine (serine 516).

The protein belongs to the dynein light intermediate chain family. As to quaternary structure, homodimer. The cytoplasmic dynein 1 complex consists of two catalytic heavy chains (HCs) and a number of non-catalytic subunits presented by intermediate chains (ICs), light intermediate chains (LICs) and light chains (LCs); the composition seems to vary in respect to the IC, LIC and LC composition. The heavy chain homodimer serves as a scaffold for the probable homodimeric assembly of the respective non-catalytic subunits. The ICs and LICs bind directly to the HC dimer and the LCs assemble on the IC dimer. Self-associates. Interacts with DYNC1H1; DYNC1LI1 and DYNC1LI2 bind mutually exclusive to DYNC1H1. Interacts with PCNT. Forms a complex with RAB11FIP3 and RAB11A1; the interaction between DYNC1LI1 and RAB11FIP3 is direct and induces DYNC1LI1 localization onto endosomal membrane; the complex regulates endocytic trafficking. Interacts with RUFY3. In terms of processing, phosphorylated during mitosis but not in interphase.

It is found in the cytoplasm. The protein resides in the chromosome. It localises to the centromere. Its subcellular location is the kinetochore. The protein localises to the cytoskeleton. It is found in the spindle pole. The protein resides in the recycling endosome membrane. In terms of biological role, acts as one of several non-catalytic accessory components of the cytoplasmic dynein 1 complex that are thought to be involved in linking dynein to cargos and to adapter proteins that regulate dynein function. Cytoplasmic dynein 1 acts as a motor for the intracellular retrograde motility of vesicles and organelles along microtubules. May play a role in binding dynein to membranous organelles or chromosomes. Probably involved in the microtubule-dependent transport of pericentrin. Is required for progress through the spindle assembly checkpoint. The phosphorylated form appears to be involved in the selective removal of MAD1L1 and MAD1L2 but not BUB1B from kinetochores. Forms a functional Rab11/RAB11FIP3/dynein complex onto endosomal membrane that regulates the movement of peripheral sorting endosomes (SE) along microtubule tracks toward the microtubule organizing center/centrosome, generating the endosomal recycling compartment (ERC). The protein is Cytoplasmic dynein 1 light intermediate chain 1 (Dync1li1) of Rattus norvegicus (Rat).